The primary structure comprises 258 residues: Phosphoadenosine 5'-phosphosulfate reductase (258 aa).

The Nucleophile; cysteine thiosulfonate intermediate role is filled by C244.

This sequence belongs to the PAPS reductase family. CysH subfamily.

Its subcellular location is the cytoplasm. The enzyme catalyses [thioredoxin]-disulfide + sulfite + adenosine 3',5'-bisphosphate + 2 H(+) = [thioredoxin]-dithiol + 3'-phosphoadenylyl sulfate. It participates in sulfur metabolism; hydrogen sulfide biosynthesis; sulfite from sulfate: step 3/3. Its function is as follows. Catalyzes the formation of sulfite from phosphoadenosine 5'-phosphosulfate (PAPS) using thioredoxin as an electron donor. The chain is Phosphoadenosine 5'-phosphosulfate reductase from Vibrio vulnificus (strain YJ016).